The sequence spans 459 residues: UDP-N-acetylmuramate--L-alanine ligase (459 aa).

118-124 (GTHGKTT) contacts ATP.

The protein belongs to the MurCDEF family.

Its subcellular location is the cytoplasm. It catalyses the reaction UDP-N-acetyl-alpha-D-muramate + L-alanine + ATP = UDP-N-acetyl-alpha-D-muramoyl-L-alanine + ADP + phosphate + H(+). Its pathway is cell wall biogenesis; peptidoglycan biosynthesis. Cell wall formation. The sequence is that of UDP-N-acetylmuramate--L-alanine ligase from Agathobacter rectalis (strain ATCC 33656 / DSM 3377 / JCM 17463 / KCTC 5835 / VPI 0990) (Eubacterium rectale).